The primary structure comprises 152 residues: uncharacterized protein (152 aa).

An N-terminal signal peptide occupies residues 1 to 23; the sequence is MYSILIACLVLLLCLVIYVGHRA.

The protein belongs to the asfivirus EP152R family.

The protein localises to the virion. This is an uncharacterized protein from Ornithodoros (relapsing fever ticks).